A 391-amino-acid polypeptide reads, in one-letter code: Phosphoprotein (391 aa).

A phosphothreonine mark is found at Thr10 and Thr16. The span at 54 to 65 shows a compositional bias: polar residues; sequence QKNIQHPTASHQ. Disordered regions lie at residues 54–98 and 145–186; these read QKNI…EPLF and TSTP…RSGS. Phosphoserine is present on Ser69. Residues Thr91, Thr150, and Thr165 each carry the phosphothreonine modification. Ser188 is subject to Phosphoserine. A coiled-coil region spans residues 218 to 245; the sequence is ANEIMDLLRGMDARLQHLEQKVDKVLAQ. Thr250 is modified (phosphothreonine). At Ser257 the chain carries Phosphoserine. Thr258 and Thr282 each carry phosphothreonine. Residues Ser292 and Ser294 each carry the phosphoserine modification. A Phosphothreonine modification is found at Thr298. Residues Ser301 and Ser374 each carry the phosphoserine modification. The tract at residues 343-391 is interaction with the nucleoprotein; sequence AGRKVMITKMITDCVANPQMKQAFEQRLAKASTEDALNDIKRDIIRNAI. Thr375 is subject to Phosphothreonine.

The protein belongs to the rubulavirus/avulavirus P protein family. In terms of assembly, homotetramer. Interacts (via multimerization domain) with polymerase L; this interaction forms the polymerase L-P complex. Interacts (via N-terminus) with N0 (via Ncore); this interaction allows P to chaperon N0 to avoid N polymerization before encapsidation. Interacts (via C-terminus) with N-RNA template; this interaction positions the polymerase on the template for both transcription and replication. Interacts with host RPS6KB1 kinase; this interaction may play a role in the viral replication and transcription.

The protein resides in the virion. Essential cofactor of the RNA polymerase L that plays a central role in the transcription and replication by forming the polymerase complex with RNA polymerase L and recruiting L to the genomic N-RNA template for RNA synthesis. Also plays a central role in the encapsidation of nascent RNA chains by forming the encapsidation complex with the nucleocapsid protein N (N-P complex). Acts as a chaperone for newly synthesized free N protein, so-called N0, allowing encapsidation of nascent RNA chains during replication. The nucleoprotein protein N prevents excessive phosphorylation of P, which leads to down-regulation of viral transcription/ replication. Participates, together with N, in the formation of viral factories (viroplasms), which are large inclusions in the host cytoplasm where replication takes place. The protein is Phosphoprotein of Mumps virus genotype N (strain L-Zagreb vaccine) (MuV).